A 202-amino-acid polypeptide reads, in one-letter code: AKFELPELPYAYDALEPTIDKETMNIHHTKHHNTYVTKLNGALEGHEDLKNKSLNDLISNLDAVPENIRTAVRNNGGGHANHSLFWKLMSPNGGGKPTGEVADKINDKYGSFEKFQEEFAAAAAGRFGSGWAWLVVNNGEIEIMSTPIQDNPLMEGKKPILGLDVWEHAYYLKYQNKRPDYISAFWNVVNWDEVAAQYSQAA.

Residue His27 participates in Mn(2+) binding. Residues Thr34 and Thr70 each carry the phosphothreonine modification. Mn(2+) is bound by residues His82, Asp164, and His168.

Belongs to the iron/manganese superoxide dismutase family. In terms of assembly, homodimer; under aerobic conditions. Under anaerobic conditions it is a component of the so-called 'green protein' complex (GPC), which consists of at least two components, SodA and a nucleoside diphosphate kinase (NDK). It depends on Mn(2+) as a cofactor.

It is found in the cytoplasm. The enzyme catalyses 2 superoxide + 2 H(+) = H2O2 + O2. Functionally, destroys superoxide anion radicals which are normally produced within the cells and which are toxic to biological systems. Active only in homodimeric state. The sequence is that of Superoxide dismutase [Mn] (sodA) from Virgibacillus halodenitrificans (Bacillus halodenitrificans).